Consider the following 341-residue polypeptide: UDP-N-acetylenolpyruvoylglucosamine reductase (341 aa).

In terms of domain architecture, FAD-binding PCMH-type spans 15-185 (LAQSCADLVE…TAVGLRLVKR (171 aa)). Arg161 is a catalytic residue. The active-site Proton donor is Ser231. The active site involves Glu327.

The protein belongs to the MurB family. FAD is required as a cofactor.

Its subcellular location is the cytoplasm. The enzyme catalyses UDP-N-acetyl-alpha-D-muramate + NADP(+) = UDP-N-acetyl-3-O-(1-carboxyvinyl)-alpha-D-glucosamine + NADPH + H(+). It functions in the pathway cell wall biogenesis; peptidoglycan biosynthesis. Cell wall formation. In Shewanella baltica (strain OS195), this protein is UDP-N-acetylenolpyruvoylglucosamine reductase.